Consider the following 308-residue polypeptide: UPF0282 protein YG5714_2245 (308 aa).

It belongs to the UPF0282 family.

This chain is UPF0282 protein YG5714_2245, found in Saccharolobus islandicus (strain Y.G.57.14 / Yellowstone #1) (Sulfolobus islandicus).